Reading from the N-terminus, the 98-residue chain is ESAT-6-like protein EsxW (98 aa).

It belongs to the WXG100 family. CFP-10 subfamily. As to quaternary structure, forms a tight 1:1 complex with EsxV. The complex is destabilized at low pH. Unfolding of the proteins is required for dissociation of the complex and membrane binding.

Its subcellular location is the secreted. The polypeptide is ESAT-6-like protein EsxW (Mycobacterium tuberculosis (strain ATCC 25618 / H37Rv)).